Consider the following 259-residue polypeptide: Protein unc-50 homolog B (259 aa).

The span at 1-11 (MLPTTSVSPRS) shows a compositional bias: polar residues. Positions 1–21 (MLPTTSVSPRSPDNGILSPRD) are disordered. The Cytoplasmic segment spans residues 1–82 (MLPTTSVSPR…TKDQWARDDP (82 aa)). The helical transmembrane segment at 83-103 (AFLVLLGIWLCVSTVGFGFVL) threads the bilayer. Residues 104–109 (DMSFFE) are Lumenal-facing. The chain crosses the membrane as a helical span at residues 110 to 130 (TFTLLLWVVFIDCVGVGLLIA). At 131–158 (TSMWFVSNKYMVNRQGKDYDVEWGYTFD) the chain is on the cytoplasmic side. The chain crosses the membrane as a helical span at residues 159-179 (VHLNAFYPLLVILHFIQLFFI). The Lumenal segment spans residues 180-181 (NH). Residues 182-202 (VILTGWFIGCFVGNTLWLIAI) traverse the membrane as a helical segment. The Cytoplasmic segment spans residues 203 to 222 (GYYIYITFLGYSALPFLKNT). Residues 223 to 243 (VVLLYPFAALALLYILSLALG) form a helical membrane-spanning segment. At 244–259 (WNFTAKLCLFYKYRVR) the chain is on the lumenal side.

The protein belongs to the unc-50 family.

It is found in the nucleus inner membrane. The protein resides in the golgi apparatus membrane. Its function is as follows. Involved in the cell surface expression of neuronal nicotinic receptors. Binds RNA. The sequence is that of Protein unc-50 homolog B (unc50-b) from Xenopus laevis (African clawed frog).